The primary structure comprises 142 residues: Cell division protein SepF (142 aa).

Belongs to the SepF family. In terms of assembly, homodimer. Interacts with FtsZ.

It is found in the cytoplasm. Cell division protein that is part of the divisome complex and is recruited early to the Z-ring. Probably stimulates Z-ring formation, perhaps through the cross-linking of FtsZ protofilaments. Its function overlaps with FtsA. This chain is Cell division protein SepF, found in Syntrophomonas wolfei subsp. wolfei (strain DSM 2245B / Goettingen).